The chain runs to 258 residues: Imidazole glycerol phosphate synthase subunit HisF (258 aa).

Residues Asp11 and Asp130 contribute to the active site.

Belongs to the HisA/HisF family. In terms of assembly, heterodimer of HisH and HisF.

The protein resides in the cytoplasm. The enzyme catalyses 5-[(5-phospho-1-deoxy-D-ribulos-1-ylimino)methylamino]-1-(5-phospho-beta-D-ribosyl)imidazole-4-carboxamide + L-glutamine = D-erythro-1-(imidazol-4-yl)glycerol 3-phosphate + 5-amino-1-(5-phospho-beta-D-ribosyl)imidazole-4-carboxamide + L-glutamate + H(+). It participates in amino-acid biosynthesis; L-histidine biosynthesis; L-histidine from 5-phospho-alpha-D-ribose 1-diphosphate: step 5/9. IGPS catalyzes the conversion of PRFAR and glutamine to IGP, AICAR and glutamate. The HisF subunit catalyzes the cyclization activity that produces IGP and AICAR from PRFAR using the ammonia provided by the HisH subunit. This is Imidazole glycerol phosphate synthase subunit HisF from Baumannia cicadellinicola subsp. Homalodisca coagulata.